The chain runs to 331 residues: ADP-L-glycero-D-manno-heptose-6-epimerase (331 aa).

NADP(+)-binding positions include 11–12 (FI), 32–33 (DN), Lys-39, Lys-54, 75–79 (EGACS), and Asn-92. Catalysis depends on Tyr-139, which acts as the Proton acceptor. Lys-143 provides a ligand contact to NADP(+). Asn-168 contacts substrate. NADP(+) contacts are provided by Val-169 and Lys-177. The active-site Proton acceptor is the Lys-177. Substrate is bound by residues Arg-179, His-186, 200–203 (FGEY), Arg-213, and Tyr-292.

It belongs to the NAD(P)-dependent epimerase/dehydratase family. HldD subfamily. As to quaternary structure, homopentamer. NADP(+) serves as cofactor.

The enzyme catalyses ADP-D-glycero-beta-D-manno-heptose = ADP-L-glycero-beta-D-manno-heptose. It participates in nucleotide-sugar biosynthesis; ADP-L-glycero-beta-D-manno-heptose biosynthesis; ADP-L-glycero-beta-D-manno-heptose from D-glycero-beta-D-manno-heptose 7-phosphate: step 4/4. Catalyzes the interconversion between ADP-D-glycero-beta-D-manno-heptose and ADP-L-glycero-beta-D-manno-heptose via an epimerization at carbon 6 of the heptose. This is ADP-L-glycero-D-manno-heptose-6-epimerase from Cupriavidus metallidurans (strain ATCC 43123 / DSM 2839 / NBRC 102507 / CH34) (Ralstonia metallidurans).